Consider the following 520-residue polypeptide: Alkaline nuclease (520 aa).

It belongs to the herpesviridae alkaline nuclease family. As to quaternary structure, interacts with major DNA-binding protein; this interaction increases the nuclease processivity of the alkaline exonuclease.

The protein localises to the host nucleus. It localises to the host cytoplasm. Plays a role in processing non linear or branched viral DNA intermediates in order to promote the production of mature packaged unit-length linear progeny viral DNA molecules. Exhibits endonuclease and exonuclease activities and accepts both double-stranded and single-stranded DNA as substrate. Exonuclease digestion of DNA is in the 5'-&gt; 3' direction and the products are 5'-monophosphate nucleosides. Additionally, forms a recombinase with the major DNA-binding protein, which displays strand exchange activity. The sequence is that of Alkaline nuclease (UL12) from Psittacid herpesvirus 1 (isolate Amazon parrot/-/97-0001/1997) (PsHV-1).